The primary structure comprises 487 residues: GTPase Der (487 aa).

2 EngA-type G domains span residues 3–166 and 193–366; these read PVIA…PRDA and IKIA…KSAV. Residues 9–16, 56–60, 118–121, 199–206, 246–250, and 311–314 contribute to the GTP site; these read GRPNVGKS, DTGGI, NKID, DTAGV, and NKWD. Residues 367–451 form the KH-like domain; it reads TRWPTSRLTQ…PIRIEYKGGE (85 aa). A compositionally biased stretch (basic and acidic residues) spans 448-461; it reads KGGENPYEGKKNTL. Positions 448–487 are disordered; it reads KGGENPYEGKKNTLTDRQVNKKRRLMSHHKKAEKKRRDKR. A compositionally biased stretch (basic residues) spans 467-487; it reads NKKRRLMSHHKKAEKKRRDKR.

It belongs to the TRAFAC class TrmE-Era-EngA-EngB-Septin-like GTPase superfamily. EngA (Der) GTPase family. Associates with the 50S ribosomal subunit.

GTPase that plays an essential role in the late steps of ribosome biogenesis. This chain is GTPase Der, found in Pseudomonas putida (strain W619).